Here is a 163-residue protein sequence, read N- to C-terminus: NADH-quinone oxidoreductase subunit I (163 aa).

2 consecutive 4Fe-4S ferredoxin-type domains span residues leucine 53–glycine 83 and valine 94–asparagine 123. Residues cysteine 63, cysteine 66, cysteine 69, cysteine 73, cysteine 103, cysteine 106, cysteine 109, and cysteine 113 each coordinate [4Fe-4S] cluster.

This sequence belongs to the complex I 23 kDa subunit family. NDH-1 is composed of 14 different subunits. Subunits NuoA, H, J, K, L, M, N constitute the membrane sector of the complex. It depends on [4Fe-4S] cluster as a cofactor.

The protein localises to the cell inner membrane. The enzyme catalyses a quinone + NADH + 5 H(+)(in) = a quinol + NAD(+) + 4 H(+)(out). Its function is as follows. NDH-1 shuttles electrons from NADH, via FMN and iron-sulfur (Fe-S) centers, to quinones in the respiratory chain. The immediate electron acceptor for the enzyme in this species is believed to be ubiquinone. Couples the redox reaction to proton translocation (for every two electrons transferred, four hydrogen ions are translocated across the cytoplasmic membrane), and thus conserves the redox energy in a proton gradient. The sequence is that of NADH-quinone oxidoreductase subunit I from Brucella abortus (strain S19).